The primary structure comprises 256 residues: Protein RGF1 INDUCIBLE TRANSCRIPTION FACTOR 1 (256 aa).

A B box-type zinc finger spans residues 21-59 (CPYHETAKKNERNVCCLDCCTSLCPHCVPSHRFHRLLQV).

In terms of tissue distribution, expressed predominantly in root meristematic zones.

Its subcellular location is the nucleus. Functionally, probable transcription factor that plays a central role in mediating RGF1 hormone peptide signaling leading to the production of reactive oxygen species (ROS) in roots to modulate meristem size and root growth, probably via oxidative post-translational modification of the transcription factor PLETHORA (e.g. PLT1 and PLT2). This Arabidopsis thaliana (Mouse-ear cress) protein is Protein RGF1 INDUCIBLE TRANSCRIPTION FACTOR 1.